The primary structure comprises 207 residues: Thymidylate kinase (207 aa).

Gly-7–Ser-14 provides a ligand contact to ATP.

The protein belongs to the thymidylate kinase family.

The enzyme catalyses dTMP + ATP = dTDP + ADP. In terms of biological role, phosphorylation of dTMP to form dTDP in both de novo and salvage pathways of dTTP synthesis. This is Thymidylate kinase from Chlamydia felis (strain Fe/C-56) (Chlamydophila felis).